A 353-amino-acid chain; its full sequence is Photosystem II protein D1 (353 aa).

Position 2 is an N-acetylthreonine (threonine 2). Phosphothreonine is present on threonine 2. Helical transmembrane passes span 29–46 (YVGWFGVIMIPTLLTAVS), 118–133 (HFFLGICCYMGREWEL), and 142–156 (WIAVAYSAPVAAATA). Histidine 118 contacts chlorophyll a. Tyrosine 126 is a binding site for pheophytin a. [CaMn4O5] cluster contacts are provided by aspartate 170 and glutamate 189. Residues 197–218 (FHMLGVAGVFGGSLFSAMHGSL) form a helical membrane-spanning segment. Histidine 198 lines the chlorophyll a pocket. Residues histidine 215 and 264–265 (SF) contribute to the a quinone site. Histidine 215 is a binding site for Fe cation. Histidine 272 is a Fe cation binding site. The chain crosses the membrane as a helical span at residues 274 to 288 (FLAAWPVVGIWFTAL). Positions 332, 333, 342, and 344 each coordinate [CaMn4O5] cluster. The propeptide occupies 345–353 (SVEAPSING).

This sequence belongs to the reaction center PufL/M/PsbA/D family. In terms of assembly, PSII is composed of 1 copy each of membrane proteins PsbA, PsbB, PsbC, PsbD, PsbE, PsbF, PsbH, PsbI, PsbJ, PsbK, PsbL, PsbM, PsbT, PsbX, PsbY, PsbZ, Psb30/Ycf12, at least 3 peripheral proteins of the oxygen-evolving complex and a large number of cofactors. It forms dimeric complexes. The D1/D2 heterodimer binds P680, chlorophylls that are the primary electron donor of PSII, and subsequent electron acceptors. It shares a non-heme iron and each subunit binds pheophytin, quinone, additional chlorophylls, carotenoids and lipids. D1 provides most of the ligands for the Mn4-Ca-O5 cluster of the oxygen-evolving complex (OEC). There is also a Cl(-1) ion associated with D1 and D2, which is required for oxygen evolution. The PSII complex binds additional chlorophylls, carotenoids and specific lipids. is required as a cofactor. In terms of processing, tyr-161 forms a radical intermediate that is referred to as redox-active TyrZ, YZ or Y-Z. Post-translationally, C-terminally processed by CTPA; processing is essential to allow assembly of the oxygen-evolving complex and thus photosynthetic growth.

It is found in the plastid. The protein localises to the chloroplast thylakoid membrane. The catalysed reaction is 2 a plastoquinone + 4 hnu + 2 H2O = 2 a plastoquinol + O2. Its function is as follows. Photosystem II (PSII) is a light-driven water:plastoquinone oxidoreductase that uses light energy to abstract electrons from H(2)O, generating O(2) and a proton gradient subsequently used for ATP formation. It consists of a core antenna complex that captures photons, and an electron transfer chain that converts photonic excitation into a charge separation. The D1/D2 (PsbA/PsbD) reaction center heterodimer binds P680, the primary electron donor of PSII as well as several subsequent electron acceptors. The chain is Photosystem II protein D1 from Tupiella akineta (Green alga).